We begin with the raw amino-acid sequence, 200 residues long: Protein-methionine-sulfoxide reductase heme-binding subunit MsrQ (200 aa).

5 consecutive transmembrane segments (helical) span residues 8–28 (ITWL…WLFY), 54–74 (LLLA…PLLI), 79–99 (LLGL…SLLE), 116–136 (PYLT…LTSF), and 153–173 (FIYL…KILS).

This sequence belongs to the MsrQ family. As to quaternary structure, heterodimer of a catalytic subunit (MsrP) and a heme-binding subunit (MsrQ). It depends on FMN as a cofactor. Requires heme b as cofactor.

The protein localises to the cell inner membrane. In terms of biological role, part of the MsrPQ system that repairs oxidized periplasmic proteins containing methionine sulfoxide residues (Met-O), using respiratory chain electrons. Thus protects these proteins from oxidative-stress damage caused by reactive species of oxygen and chlorine generated by the host defense mechanisms. MsrPQ is essential for the maintenance of envelope integrity under bleach stress, rescuing a wide series of structurally unrelated periplasmic proteins from methionine oxidation. MsrQ provides electrons for reduction to the reductase catalytic subunit MsrP, using the quinone pool of the respiratory chain. The sequence is that of Protein-methionine-sulfoxide reductase heme-binding subunit MsrQ from Cronobacter sakazakii (strain ATCC BAA-894) (Enterobacter sakazakii).